The sequence spans 84 residues: Putative defensin-like protein 139 (84 aa).

The first 28 residues, 1–28 (MEPSNQIFFYLRRSKLLSGLGEIRMAKG), serve as a signal peptide directing secretion. Intrachain disulfides connect Cys37–Cys81, Cys46–Cys65, Cys51–Cys75, and Cys55–Cys77.

The protein belongs to the DEFL family.

Its subcellular location is the secreted. The chain is Putative defensin-like protein 139 (LCR7) from Arabidopsis thaliana (Mouse-ear cress).